The following is a 412-amino-acid chain: Serine hydroxymethyltransferase (412 aa).

Residues Leu117 and 121 to 123 contribute to the (6S)-5,6,7,8-tetrahydrofolate site; that span reads GHL. The residue at position 226 (Lys226) is an N6-(pyridoxal phosphate)lysine. Position 349 to 351 (349 to 351) interacts with (6S)-5,6,7,8-tetrahydrofolate; sequence SPF.

The protein belongs to the SHMT family. As to quaternary structure, homodimer. It depends on pyridoxal 5'-phosphate as a cofactor.

It localises to the cytoplasm. The catalysed reaction is (6R)-5,10-methylene-5,6,7,8-tetrahydrofolate + glycine + H2O = (6S)-5,6,7,8-tetrahydrofolate + L-serine. The protein operates within one-carbon metabolism; tetrahydrofolate interconversion. It functions in the pathway amino-acid biosynthesis; glycine biosynthesis; glycine from L-serine: step 1/1. Its function is as follows. Catalyzes the reversible interconversion of serine and glycine with tetrahydrofolate (THF) serving as the one-carbon carrier. This reaction serves as the major source of one-carbon groups required for the biosynthesis of purines, thymidylate, methionine, and other important biomolecules. Also exhibits THF-independent aldolase activity toward beta-hydroxyamino acids, producing glycine and aldehydes, via a retro-aldol mechanism. This Nitratidesulfovibrio vulgaris (strain ATCC 29579 / DSM 644 / CCUG 34227 / NCIMB 8303 / VKM B-1760 / Hildenborough) (Desulfovibrio vulgaris) protein is Serine hydroxymethyltransferase.